The chain runs to 77 residues: Lantipeptide prochlorosin 4.3 (77 aa).

The propeptide occupies M1–G64. Residue T65 is modified to 2,3-didehydrobutyrine. The segment at residues S67–C70 is a cross-link (lanthionine (Ser-Cys)). A cross-link (beta-methyllanthionine (Thr-Cys)) is located at residues T72–C76.

Cross-links are proved in vitro, when coepressed in E.coli with the ProcM lanthionine synthetase. Post-translationally, the lanthionine residue has both a DL configuration (with 2S,6R stereochemistry) and a LL configuration (with 2R,6R stereochemistry). DL and LL diastomers have a 4:1 ratio. It is unknown whether nonenzymatic cyclization occur, but authors favor a model in which ProcM does generate all thioether cross-links. The beta-methyllanthionine residue has a DL configuration (with 2S,3S,6R stereochemistry). In terms of processing, maturation of prochlorosin involves the enzymatic conversion of Thr, and Ser into dehydrated AA and the formation of thioether bonds with cysteines. This is followed by membrane translocation and cleavage of the modified precursor.

It localises to the secreted. In terms of biological role, lanthionine-containing peptide (lantipeptide) with unknown function. Does not show antibiotic activity against Lactococcus lactis 117 and Bacillus subtilis 6633 bacteria. Organisms that produce this peptide live in oligotrophic environments at very dilute concentrations, suggesting this peptide is not secreted to influence other bacteria. The sequence is that of Lantipeptide prochlorosin 4.3 from Prochlorococcus marinus (strain MIT 9313).